Here is a 132-residue protein sequence, read N- to C-terminus: Small ribosomal subunit protein eS12 (132 aa).

Alanine 2 carries the N-acetylalanine modification. Position 129 is an N6-succinyllysine (lysine 129).

It belongs to the eukaryotic ribosomal protein eS12 family. Part of the small subunit (SSU) processome, composed of more than 70 proteins and the RNA chaperone small nucleolar RNA (snoRNA) U3. Subunit of the 40S ribosomal complex.

The protein resides in the nucleus. The protein localises to the nucleolus. Part of the small subunit (SSU) processome, first precursor of the small eukaryotic ribosomal subunit. During the assembly of the SSU processome in the nucleolus, many ribosome biogenesis factors, an RNA chaperone and ribosomal proteins associate with the nascent pre-rRNA and work in concert to generate RNA folding, modifications, rearrangements and cleavage as well as targeted degradation of pre-ribosomal RNA by the RNA exosome. Subunit of the 40S ribosomal complex. In Rattus norvegicus (Rat), this protein is Small ribosomal subunit protein eS12 (Rps12).